Consider the following 399-residue polypeptide: MIKNQSQAGRYGDFGGQYVPETLMTELQRLDRAFQHYRQDAHFQEELTDLLNNYANRPSLLYHAQRLSDQLGGAQIYFKREDLNHTGAHKINNVLGQALLAKKMGKKRLIAETGAGQHGVATATIAALFGMECDVFMGKKDTNRQALNVYRMQLLGAKVHPVTTGSMVLKDAINAALQEWTRRCDDTAYIMGSATGPHPFPMMVHEFQSVISVEARQQILDQTGHLPDAVVACVGGGSNAIGSFAAFLDDTSVELIGCEAAGKGVQTPLTAATIERGRTGIFHGMKSLFLQDKAGQIAPVYSISAGLDYPGVGPEHAYLAASGRAQYVGINDDQAVQAFELIAKVEGVICAIESAHAVAYVQQLAPTMRRDQTIICTLSGRGDKDVAAIAKYRGVTIDD.

N6-(pyridoxal phosphate)lysine is present on lysine 90.

It belongs to the TrpB family. In terms of assembly, tetramer of two alpha and two beta chains. Pyridoxal 5'-phosphate serves as cofactor.

It carries out the reaction (1S,2R)-1-C-(indol-3-yl)glycerol 3-phosphate + L-serine = D-glyceraldehyde 3-phosphate + L-tryptophan + H2O. Its pathway is amino-acid biosynthesis; L-tryptophan biosynthesis; L-tryptophan from chorismate: step 5/5. Functionally, the beta subunit is responsible for the synthesis of L-tryptophan from indole and L-serine. In Lactiplantibacillus plantarum (strain ATCC BAA-793 / NCIMB 8826 / WCFS1) (Lactobacillus plantarum), this protein is Tryptophan synthase beta chain.